A 107-amino-acid chain; its full sequence is Large ribosomal subunit protein uL23 (107 aa).

It belongs to the universal ribosomal protein uL23 family. In terms of assembly, part of the 50S ribosomal subunit. Contacts protein L29, and trigger factor when it is bound to the ribosome.

One of the early assembly proteins it binds 23S rRNA. One of the proteins that surrounds the polypeptide exit tunnel on the outside of the ribosome. Forms the main docking site for trigger factor binding to the ribosome. This chain is Large ribosomal subunit protein uL23, found in Gluconobacter oxydans (strain 621H) (Gluconobacter suboxydans).